The primary structure comprises 424 residues: UDP-N-acetylglucosamine 1-carboxyvinyltransferase (424 aa).

22-23 serves as a coordination point for phosphoenolpyruvate; the sequence is KN. Arg93 contributes to the UDP-N-acetyl-alpha-D-glucosamine binding site. The Proton donor role is filled by Cys117. Cys117 is modified (2-(S-cysteinyl)pyruvic acid O-phosphothioketal). Residues 122-126, 162-165, Asp307, and Ile329 each bind UDP-N-acetyl-alpha-D-glucosamine; these read RPVDL and KVSV.

The protein belongs to the EPSP synthase family. MurA subfamily.

Its subcellular location is the cytoplasm. It carries out the reaction phosphoenolpyruvate + UDP-N-acetyl-alpha-D-glucosamine = UDP-N-acetyl-3-O-(1-carboxyvinyl)-alpha-D-glucosamine + phosphate. It participates in cell wall biogenesis; peptidoglycan biosynthesis. Its function is as follows. Cell wall formation. Adds enolpyruvyl to UDP-N-acetylglucosamine. This chain is UDP-N-acetylglucosamine 1-carboxyvinyltransferase, found in Haemophilus influenzae (strain 86-028NP).